The primary structure comprises 179 residues: tRNA (cytidine(56)-2'-O)-methyltransferase (179 aa).

Residue leucine 84 coordinates S-adenosyl-L-methionine.

This sequence belongs to the aTrm56 family. As to quaternary structure, homodimer.

It is found in the cytoplasm. The catalysed reaction is cytidine(56) in tRNA + S-adenosyl-L-methionine = 2'-O-methylcytidine(56) in tRNA + S-adenosyl-L-homocysteine + H(+). Specifically catalyzes the AdoMet-dependent 2'-O-ribose methylation of cytidine at position 56 in tRNAs. This is tRNA (cytidine(56)-2'-O)-methyltransferase from Methanothermobacter thermautotrophicus (strain ATCC 29096 / DSM 1053 / JCM 10044 / NBRC 100330 / Delta H) (Methanobacterium thermoautotrophicum).